We begin with the raw amino-acid sequence, 185 residues long: Ribosome-recycling factor (185 aa).

The protein belongs to the RRF family.

The protein resides in the cytoplasm. In terms of biological role, responsible for the release of ribosomes from messenger RNA at the termination of protein biosynthesis. May increase the efficiency of translation by recycling ribosomes from one round of translation to another. The sequence is that of Ribosome-recycling factor from Clavibacter sepedonicus (Clavibacter michiganensis subsp. sepedonicus).